The following is a 303-amino-acid chain: MENITNNSERSLDRPKRQRPVSMENVGGTASGSEVARSATLLELDLLDCPICYHKLGAPIYQCDNGHIACSSCCKKVKYKCPYCSLRIGFFRSRILEKIVEAVVVSCPNAKYGCTEKIPYDNESESAHERVCEFTLCYCPEPECKYTGVYTDLYRHYHAEHKTDHSWFKCGEYNNAWLHVTGEKLSFLVLQEYEDGPLVVVQCSMESHGICVTVNCIAPCAPGVGEFSCHLIYRNGSEKITFESKKMNKIQKVSPENHVANYKPIPYYLRGEASNFMSIPYYLLDEASILKMQICIRRSGEEV.

The segment at Met-1–Ala-30 is disordered. The RING-type zinc-finger motif lies at Cys-49–Ser-85. The segment at Ile-99–Glu-286 is SBD. The SIAH-type zinc-finger motif lies at Ala-102–Lys-162. The Zn(2+) site is built by Cys-107, Cys-114, His-128, Cys-132, Cys-139, Cys-144, His-156, and His-161.

The protein belongs to the SINA (Seven in absentia) family.

It carries out the reaction S-ubiquitinyl-[E2 ubiquitin-conjugating enzyme]-L-cysteine + [acceptor protein]-L-lysine = [E2 ubiquitin-conjugating enzyme]-L-cysteine + N(6)-ubiquitinyl-[acceptor protein]-L-lysine.. It functions in the pathway protein modification; protein ubiquitination. In terms of biological role, E3 ubiquitin-protein ligase that mediates ubiquitination and subsequent proteasomal degradation of target proteins. E3 ubiquitin ligases accept ubiquitin from an E2 ubiquitin-conjugating enzyme in the form of a thioester and then directly transfers the ubiquitin to targeted substrates. It probably triggers the ubiquitin-mediated degradation of different substrates. This Arabidopsis thaliana (Mouse-ear cress) protein is E3 ubiquitin-protein ligase SINA-like 3.